The sequence spans 260 residues: Hydroxyacylglutathione hydrolase (260 aa).

The Zn(2+) site is built by His61, His63, Asp65, His66, His119, Asp138, and His176.

This sequence belongs to the metallo-beta-lactamase superfamily. Glyoxalase II family. Monomer. It depends on Zn(2+) as a cofactor.

It catalyses the reaction an S-(2-hydroxyacyl)glutathione + H2O = a 2-hydroxy carboxylate + glutathione + H(+). It functions in the pathway secondary metabolite metabolism; methylglyoxal degradation; (R)-lactate from methylglyoxal: step 2/2. In terms of biological role, thiolesterase that catalyzes the hydrolysis of S-D-lactoyl-glutathione to form glutathione and D-lactic acid. The sequence is that of Hydroxyacylglutathione hydrolase from Brucella anthropi (strain ATCC 49188 / DSM 6882 / CCUG 24695 / JCM 21032 / LMG 3331 / NBRC 15819 / NCTC 12168 / Alc 37) (Ochrobactrum anthropi).